Reading from the N-terminus, the 417-residue chain is Serine hydroxymethyltransferase (417 aa).

Residues L121 and 125–127 (GHL) contribute to the (6S)-5,6,7,8-tetrahydrofolate site. The residue at position 229 (K229) is an N6-(pyridoxal phosphate)lysine. 355 to 357 (SPF) is a (6S)-5,6,7,8-tetrahydrofolate binding site.

It belongs to the SHMT family. Homodimer. It depends on pyridoxal 5'-phosphate as a cofactor.

It localises to the cytoplasm. The catalysed reaction is (6R)-5,10-methylene-5,6,7,8-tetrahydrofolate + glycine + H2O = (6S)-5,6,7,8-tetrahydrofolate + L-serine. The protein operates within one-carbon metabolism; tetrahydrofolate interconversion. Its pathway is amino-acid biosynthesis; glycine biosynthesis; glycine from L-serine: step 1/1. Its function is as follows. Catalyzes the reversible interconversion of serine and glycine with tetrahydrofolate (THF) serving as the one-carbon carrier. This reaction serves as the major source of one-carbon groups required for the biosynthesis of purines, thymidylate, methionine, and other important biomolecules. Also exhibits THF-independent aldolase activity toward beta-hydroxyamino acids, producing glycine and aldehydes, via a retro-aldol mechanism. The polypeptide is Serine hydroxymethyltransferase (Shewanella amazonensis (strain ATCC BAA-1098 / SB2B)).